A 211-amino-acid polypeptide reads, in one-letter code: tRNA (guanine-N(7)-)-methyltransferase (211 aa).

Glutamate 44, aspartate 69, aspartate 96, and aspartate 118 together coordinate S-adenosyl-L-methionine. Aspartate 118 is an active-site residue. Residue lysine 122 coordinates substrate. The segment at 124–129 (RHEKRR) is interaction with RNA. Residues aspartate 154 and 191 to 194 (TEYE) each bind substrate.

This sequence belongs to the class I-like SAM-binding methyltransferase superfamily. TrmB family.

It catalyses the reaction guanosine(46) in tRNA + S-adenosyl-L-methionine = N(7)-methylguanosine(46) in tRNA + S-adenosyl-L-homocysteine. Its pathway is tRNA modification; N(7)-methylguanine-tRNA biosynthesis. Its function is as follows. Catalyzes the formation of N(7)-methylguanine at position 46 (m7G46) in tRNA. This Streptococcus equi subsp. zooepidemicus (strain H70) protein is tRNA (guanine-N(7)-)-methyltransferase.